A 171-amino-acid polypeptide reads, in one-letter code: 3-hydroxydecanoyl-[acyl-carrier-protein] dehydratase (171 aa).

His70 is an active-site residue.

This sequence belongs to the thioester dehydratase family. FabA subfamily. As to quaternary structure, homodimer.

It localises to the cytoplasm. It catalyses the reaction a (3R)-hydroxyacyl-[ACP] = a (2E)-enoyl-[ACP] + H2O. The enzyme catalyses (3R)-hydroxydecanoyl-[ACP] = (2E)-decenoyl-[ACP] + H2O. The catalysed reaction is (2E)-decenoyl-[ACP] = (3Z)-decenoyl-[ACP]. Its pathway is lipid metabolism; fatty acid biosynthesis. Necessary for the introduction of cis unsaturation into fatty acids. Catalyzes the dehydration of (3R)-3-hydroxydecanoyl-ACP to E-(2)-decenoyl-ACP and then its isomerization to Z-(3)-decenoyl-ACP. Can catalyze the dehydratase reaction for beta-hydroxyacyl-ACPs with saturated chain lengths up to 16:0, being most active on intermediate chain length. This Marinomonas sp. (strain MWYL1) protein is 3-hydroxydecanoyl-[acyl-carrier-protein] dehydratase.